A 146-amino-acid chain; its full sequence is Large ribosomal subunit protein uL15 (146 aa).

Residues methionine 1–arginine 13 are compositionally biased toward basic and acidic residues. A disordered region spans residues methionine 1–arginine 60. Gly residues-rich tracts occupy residues arginine 21–alanine 31 and serine 42–glycine 52.

It belongs to the universal ribosomal protein uL15 family. As to quaternary structure, part of the 50S ribosomal subunit.

Functionally, binds to the 23S rRNA. The sequence is that of Large ribosomal subunit protein uL15 from Lysinibacillus sphaericus (strain C3-41).